The following is a 116-amino-acid chain: Protein Rev (116 aa).

Serine 8 carries the phosphoserine; by host CK2 modification. The tract at residues 18–26 (LIKSLYQSN) is homomultimerization. Disordered stretches follow at residues 20 to 46 (KSLY…RRWR) and 84 to 116 (DSSE…GAKE). The Nuclear localization signal and RNA-binding (RRE) motif lies at 34 to 50 (TRQARRNRRRRWRERQR). Basic residues predominate over residues 36-46 (QARRNRRRRWR). A Nuclear export signal and binding to XPO1 motif is present at residues 73 to 84 (LQLPPLERLTLD). Residues 88-98 (DCGTSGTQGVG) are compositionally biased toward polar residues. Phosphoserine; by host is present on residues serine 92 and serine 99.

Belongs to the HIV-1 REV protein family. As to quaternary structure, homomultimer; when bound to the RRE. Multimeric assembly is essential for activity and may involve XPO1. Binds to human KPNB1, XPO1, TNPO1, RANBP5 and IPO7. Interacts with the viral Integrase. Interacts with human KHDRBS1. Interacts with human NAP1; this interaction decreases Rev multimerization and stimulates its activity. Interacts with human DEAD-box helicases DDX3 and DDX24; these interactions may serve for viral RNA export to the cytoplasm and packaging, respectively. Interacts with human PSIP1; this interaction may inhibit HIV-1 DNA integration by promoting dissociation of the Integrase-LEDGF/p75 complex. In terms of processing, asymmetrically arginine dimethylated at one site by host PRMT6. Methylation impairs the RNA-binding activity and export of viral RNA from the nucleus to the cytoplasm. Phosphorylated by protein kinase CK2. Presence of, and maybe binding to the N-terminus of the regulatory beta subunit of CK2 is necessary for CK2-mediated Rev's phosphorylation.

It localises to the host nucleus. The protein resides in the host nucleolus. It is found in the host cytoplasm. Functionally, escorts unspliced or incompletely spliced viral pre-mRNAs (late transcripts) out of the nucleus of infected cells. These pre-mRNAs carry a recognition sequence called Rev responsive element (RRE) located in the env gene, that is not present in fully spliced viral mRNAs (early transcripts). This function is essential since most viral proteins are translated from unspliced or partially spliced pre-mRNAs which cannot exit the nucleus by the pathway used by fully processed cellular mRNAs. Rev itself is translated from a fully spliced mRNA that readily exits the nucleus. Rev's nuclear localization signal (NLS) binds directly to KPNB1/Importin beta-1 without previous binding to KPNA1/Importin alpha-1. KPNB1 binds to the GDP bound form of RAN (Ran-GDP) and targets Rev to the nucleus. In the nucleus, the conversion from Ran-GDP to Ran-GTP dissociates Rev from KPNB1 and allows Rev's binding to the RRE in viral pre-mRNAs. Rev multimerization on the RRE via cooperative assembly exposes its nuclear export signal (NES) to the surface. Rev can then form a complex with XPO1/CRM1 and Ran-GTP, leading to nuclear export of the complex. Conversion from Ran-GTP to Ran-GDP mediates dissociation of the Rev/RRE/XPO1/RAN complex, so that Rev can return to the nucleus for a subsequent round of export. Beside KPNB1, also seems to interact with TNPO1/Transportin-1, RANBP5/IPO5 and IPO7/RANBP7 for nuclear import. The nucleoporin-like HRB/RIP is an essential cofactor that probably indirectly interacts with Rev to release HIV RNAs from the perinuclear region to the cytoplasm. The protein is Protein Rev of Human immunodeficiency virus type 1 group M subtype B (isolate RF/HAT3) (HIV-1).